The sequence spans 383 residues: Caspase a (383 aa).

Positions 1-142 (MAKSIKDHLQ…ETYEIKDKSV (142 aa)) are excised as a propeptide. Positions 8 to 81 (HLQDALSNIG…RGIKCNAVAE (74 aa)) constitute a Pyrin domain. The disordered stretch occupies residues 87–106 (TGQGGVSQPEPPVPEPIPKD). Residues His220 and Cys270 contribute to the active site. A propeptide spanning residues 275 to 296 (HGRVWASDGEPDEPIEIEDDDF) is cleaved from the precursor.

It belongs to the peptidase C14A family. Heterotetramer that consists of two anti-parallel arranged heterodimers, each one formed by a 20 kDa (p20) and a 10 kDa (p10) subunit. Interacts (via pyrin domain) with pycard (via pyrin domain). Interacts with caspb. Component of NLRP1 inflammasomes. Inflammasomes are supramolecular complexes that assemble in the cytosol in response to pathogens and other damage-associated signals and play critical roles in innate immunity and inflammation. The NLRP1 inflammasome is composed of the signal sensor nlrp1, and the adapter pycard (asc), which recruit effector pro-inflammatory caspases caspa and/or caspb. The interaction between nlrp1 and pycard is required for the sequential recruitment of caspa and then caspb. Caspa is preferentially recruited first and this causes the cleavage of pro-il1b into the midformed il1b. This is followed by the recruitment of caspb, which is activated and cleaves the midformed il1b resulting in il1b maturation. Interacts with caiap. Post-translationally, the two subunits are derived from the precursor sequence by an autocatalytic mechanism.

The protein resides in the inflammasome. It localises to the cytoplasm. The catalysed reaction is Strict requirement for an Asp residue at position P1 and has a preferred cleavage sequence of Tyr-Val-Ala-Asp-|-.. Thiol protease which cleaves IL-1 beta (il1b), releasing the mature cytokine which is involved in a variety of inflammatory processes, and mediates apoptosis. Component of the NLRP1 inflammasome, which plays a crucial role in innate immunity and inflammation. In response to pathogens and other damage-associated signals, recruited to the NLRP1 inflammasome in its precursor form. Its subsequent activation causes the cleavage of pro-il1b into the midformed il1b, which then evetually leads to il1b maturation and secretion in the extracellular milieu. Required for the development of the cartilaginous pharyngeal skeleton. This is Caspase a from Danio rerio (Zebrafish).